Reading from the N-terminus, the 330-residue chain is GMP reductase (330 aa).

Cys180 serves as the catalytic Thioimidate intermediate. Leu209–Val232 contributes to the NADP(+) binding site.

The protein belongs to the IMPDH/GMPR family. GuaC type 2 subfamily.

The catalysed reaction is IMP + NH4(+) + NADP(+) = GMP + NADPH + 2 H(+). Functionally, catalyzes the irreversible NADPH-dependent deamination of GMP to IMP. It functions in the conversion of nucleobase, nucleoside and nucleotide derivatives of G to A nucleotides, and in maintaining the intracellular balance of A and G nucleotides. The protein is GMP reductase of Lactobacillus gasseri (strain ATCC 33323 / DSM 20243 / BCRC 14619 / CIP 102991 / JCM 1131 / KCTC 3163 / NCIMB 11718 / NCTC 13722 / AM63).